Here is a 522-residue protein sequence, read N- to C-terminus: Probable cytochrome P450 12e1, mitochondrial (522 aa).

Residue Cys-468 participates in heme binding.

Belongs to the cytochrome P450 family. Requires heme as cofactor.

The protein resides in the mitochondrion membrane. The sequence is that of Probable cytochrome P450 12e1, mitochondrial (Cyp12e1) from Drosophila melanogaster (Fruit fly).